The sequence spans 257 residues: Acetylglutamate kinase (257 aa).

Substrate-binding positions include 43-44 (GG), arginine 65, and asparagine 157. ATP-binding positions include 180–185 (DVSGIL) and 208–210 (IIT).

It belongs to the acetylglutamate kinase family. ArgB subfamily. As to quaternary structure, homodimer.

The protein resides in the cytoplasm. It catalyses the reaction N-acetyl-L-glutamate + ATP = N-acetyl-L-glutamyl 5-phosphate + ADP. It functions in the pathway amino-acid biosynthesis; L-arginine biosynthesis; N(2)-acetyl-L-ornithine from L-glutamate: step 2/4. Functionally, catalyzes the ATP-dependent phosphorylation of N-acetyl-L-glutamate. The sequence is that of Acetylglutamate kinase from Proteus mirabilis (strain HI4320).